The sequence spans 431 residues: Glutamate-1-semialdehyde 2,1-aminomutase (431 aa).

Residue Lys-265 is modified to N6-(pyridoxal phosphate)lysine.

It belongs to the class-III pyridoxal-phosphate-dependent aminotransferase family. HemL subfamily. As to quaternary structure, homodimer. It depends on pyridoxal 5'-phosphate as a cofactor.

The protein localises to the cytoplasm. It catalyses the reaction (S)-4-amino-5-oxopentanoate = 5-aminolevulinate. Its pathway is porphyrin-containing compound metabolism; protoporphyrin-IX biosynthesis; 5-aminolevulinate from L-glutamyl-tRNA(Glu): step 2/2. The protein is Glutamate-1-semialdehyde 2,1-aminomutase of Vibrio vulnificus (strain YJ016).